The sequence spans 164 residues: Endoribonuclease YbeY (164 aa).

The Zn(2+) site is built by His-132, His-136, and His-142.

It belongs to the endoribonuclease YbeY family. Requires Zn(2+) as cofactor.

The protein localises to the cytoplasm. Its function is as follows. Single strand-specific metallo-endoribonuclease involved in late-stage 70S ribosome quality control and in maturation of the 3' terminus of the 16S rRNA. This is Endoribonuclease YbeY from Clostridium kluyveri (strain NBRC 12016).